A 203-amino-acid chain; its full sequence is Glycerol-3-phosphate acyltransferase (203 aa).

Transmembrane regions (helical) follow at residues 4–24 (MAVT…AVLI), 80–100 (PVLL…PLFF), 117–137 (PIGL…AILF), and 139–159 (YSSL…WMIK).

Belongs to the PlsY family. Probably interacts with PlsX.

Its subcellular location is the cell inner membrane. It catalyses the reaction an acyl phosphate + sn-glycerol 3-phosphate = a 1-acyl-sn-glycero-3-phosphate + phosphate. The protein operates within lipid metabolism; phospholipid metabolism. Its function is as follows. Catalyzes the transfer of an acyl group from acyl-phosphate (acyl-PO(4)) to glycerol-3-phosphate (G3P) to form lysophosphatidic acid (LPA). This enzyme utilizes acyl-phosphate as fatty acyl donor, but not acyl-CoA or acyl-ACP. The polypeptide is Glycerol-3-phosphate acyltransferase (Vibrio vulnificus (strain YJ016)).